Reading from the N-terminus, the 487-residue chain is Uronate isomerase (487 aa).

It belongs to the metallo-dependent hydrolases superfamily. Uronate isomerase family.

It carries out the reaction D-glucuronate = D-fructuronate. The catalysed reaction is aldehydo-D-galacturonate = keto-D-tagaturonate. It participates in carbohydrate metabolism; pentose and glucuronate interconversion. This is Uronate isomerase from Caulobacter vibrioides (strain ATCC 19089 / CIP 103742 / CB 15) (Caulobacter crescentus).